Reading from the N-terminus, the 497-residue chain is Glucose-6-phosphate isomerase (497 aa).

The active-site Proton donor is E350. Catalysis depends on residues H381 and K485.

Belongs to the GPI family.

It localises to the cytoplasm. It carries out the reaction alpha-D-glucose 6-phosphate = beta-D-fructose 6-phosphate. It functions in the pathway carbohydrate biosynthesis; gluconeogenesis. It participates in carbohydrate degradation; glycolysis; D-glyceraldehyde 3-phosphate and glycerone phosphate from D-glucose: step 2/4. In terms of biological role, catalyzes the reversible isomerization of glucose-6-phosphate to fructose-6-phosphate. The sequence is that of Glucose-6-phosphate isomerase from Legionella pneumophila.